Reading from the N-terminus, the 1030-residue chain is Leucine-rich repeat and coiled-coil domain-containing protein 1 (1030 aa).

LRR repeat units lie at residues 7–28, 29–50, 51–72, 73–94, 95–116, and 121–142; these read RNRELSLMDKQISSLLEICLNS, NLYSINLHCNQISKIEGLRHLC, YLQHLDLSSNLITKIEGLDSLA, SLQSLNLSCNKLTRVEGLEKLF, NLKKLNLSYNSIQDLTGLIPLH, and KLSHLYLHSNCINSIDEVLQST. Positions 160–200 constitute an LRRCT domain; the sequence is NPVCHALGYREIILENLPQLNSLDGLDRSGDPVTAHEVDSM. Positions 298 to 401 are disordered; that stretch reads KSEQTKLKAK…GQILGKPHAI (104 aa). A compositionally biased stretch (basic and acidic residues) spans 300-311; the sequence is EQTKLKAKRDTD. Polar residues-rich tracts occupy residues 338–368 and 378–393; these read KTSQTSKQQANQQLKGRTSYSELKQNVSRKQ and ETSLSSGRTDTDSTGQ. Residues 432-645 adopt a coiled-coil conformation; it reads RERRWKAEQV…DLEDEFRAAL (214 aa).

The protein belongs to the LRRCC1 family.

The protein localises to the cytoplasm. The protein resides in the cytoskeleton. It is found in the microtubule organizing center. Its subcellular location is the centrosome. It localises to the centriole. Required for the organization of the mitotic spindle. Maintains the structural integrity of centrosomes during mitosis. This chain is Leucine-rich repeat and coiled-coil domain-containing protein 1 (lrrcc1), found in Xenopus laevis (African clawed frog).